The chain runs to 126 residues: uncharacterized protein (126 aa).

Positions 1 to 24 (MKMTKLATLFLTATLSLASGAALA) are cleaved as a signal peptide. Positions 27–47 (SGAQTNNGQANAAADAGQVAP) are enriched in low complexity. Residues 27–126 (SGAQTNNGQA…VDTKTDGTTQ (100 aa)) form a disordered region. A compositionally biased stretch (polar residues) spans 54-64 (APNNVDNNGVN). 2 stretches are compositionally biased toward basic and acidic residues: residues 84 to 105 (MTKD…DINK) and 117 to 126 (VDTKTDGTTQ).

This is an uncharacterized protein from Shigella flexneri.